The primary structure comprises 323 residues: ATP synthase gamma chain (323 aa).

Residues 215-237 are disordered; sequence PAGGPAKEQEQGDEGGHGAPSAA. Over residues 221–230 the composition is skewed to basic and acidic residues; sequence KEQEQGDEGG.

Belongs to the ATPase gamma chain family. F-type ATPases have 2 components, CF(1) - the catalytic core - and CF(0) - the membrane proton channel. CF(1) has five subunits: alpha(3), beta(3), gamma(1), delta(1), epsilon(1). CF(0) has three main subunits: a, b and c.

The protein resides in the cell inner membrane. Its function is as follows. Produces ATP from ADP in the presence of a proton gradient across the membrane. The gamma chain is believed to be important in regulating ATPase activity and the flow of protons through the CF(0) complex. The sequence is that of ATP synthase gamma chain from Sorangium cellulosum (strain So ce56) (Polyangium cellulosum (strain So ce56)).